Consider the following 315-residue polypeptide: GTP cyclohydrolase MptA (315 aa).

This sequence belongs to the GTP cyclohydrolase IV family. As to quaternary structure, homodimer. Fe(2+) serves as cofactor.

The enzyme catalyses GTP + H2O = 7,8-dihydroneopterin 2',3'-cyclic phosphate + formate + diphosphate + H(+). Its pathway is cofactor biosynthesis; 5,6,7,8-tetrahydromethanopterin biosynthesis. Its function is as follows. Converts GTP to 7,8-dihydro-D-neopterin 2',3'-cyclic phosphate, the first intermediate in the biosynthesis of coenzyme methanopterin. The polypeptide is GTP cyclohydrolase MptA (Methanococcus maripaludis (strain C7 / ATCC BAA-1331)).